The sequence spans 164 residues: Dehydrin Rab16B (164 aa).

The tract at residues 1–164 (MENYQGQHGY…KIKEKLPGQH (164 aa)) is disordered. Residues 25 to 53 (GQYGGGATAPGGGHGAMGMGGHAGAGAGG) are compositionally biased toward gly residues. Residues 107 to 117 (GNNQQQQQMMG) are compositionally biased toward low complexity. Residues 147-164 (GEKKGFMDKIKEKLPGQH) show a composition bias toward basic and acidic residues.

The protein belongs to the plant dehydrin family.

This is Dehydrin Rab16B (RAB16B) from Oryza sativa subsp. indica (Rice).